A 297-amino-acid polypeptide reads, in one-letter code: Ribosomal protein L11 methyltransferase (297 aa).

4 residues coordinate S-adenosyl-L-methionine: threonine 139, glycine 164, aspartate 186, and asparagine 233.

The protein belongs to the methyltransferase superfamily. PrmA family.

The protein localises to the cytoplasm. It catalyses the reaction L-lysyl-[protein] + 3 S-adenosyl-L-methionine = N(6),N(6),N(6)-trimethyl-L-lysyl-[protein] + 3 S-adenosyl-L-homocysteine + 3 H(+). Its function is as follows. Methylates ribosomal protein L11. This is Ribosomal protein L11 methyltransferase from Trichodesmium erythraeum (strain IMS101).